The primary structure comprises 199 residues: Hematopoietic prostaglandin D synthase (199 aa).

In terms of domain architecture, GST N-terminal spans 2 to 79 (PNYKLLYFNM…YLTKNTDLAG (78 aa)). Residues Y8, R14, W39, 49–51 (GKI), and 63–64 (QS) contribute to the glutathione site. One can recognise a GST C-terminal domain in the interval 81–199 (TELEQCQVDA…WILKRPQTKL (119 aa)).

This sequence belongs to the GST superfamily. Sigma family. In terms of assembly, homodimer. The cofactor is glutathione. In terms of tissue distribution, highly expressed in spleen and bone marrow. Lower levels of expression in small intestine, colon, liver, pancreas and skin. Not detected in brain, heart, lung or kidney (at protein level).

It localises to the cytoplasm. The catalysed reaction is prostaglandin H2 = prostaglandin D2. The enzyme catalyses RX + glutathione = an S-substituted glutathione + a halide anion + H(+). It catalyses the reaction 2-glyceryl-prostaglandin H2 = 2-glyceryl-prostaglandin D2. Its function is as follows. Bifunctional enzyme which catalyzes both the conversion of PGH2 to PGD2, a prostaglandin involved in smooth muscle contraction/relaxation and a potent inhibitor of platelet aggregation, and the conjugation of glutathione with a wide range of aryl halides and organic isothiocyanates. Also exhibits low glutathione-peroxidase activity towards cumene hydroperoxide. The polypeptide is Hematopoietic prostaglandin D synthase (Rattus norvegicus (Rat)).